The chain runs to 1503 residues: Protein Skeletor, isoforms D/E (1503 aa).

The signal sequence occupies residues 1 to 28 (MLAMKDKPWLLLFGLLAALSCLASFGDA). DM13 domains lie at 34–143 (GTKI…VSIP) and 151–258 (PQKI…VRLP). The 133-residue stretch at 287–419 (LAFEVRWAVA…GAESVVWAIG (133 aa)) folds into the DOMON domain. Disordered regions lie at residues 451–491 (PLPE…NVEP), 830–857 (NPNL…PTEI), 1086–1106 (IFNQ…SSVS), and 1426–1503 (EFRG…GRRA). The segment covering 830–840 (NPNLNPNHPNQ) has biased composition (low complexity). The segment covering 1452-1491 (SSSSGSTIYPYSSSTGASTSTVSSSASSPLSSSSLRPIST) has biased composition (low complexity).

As to quaternary structure, interacts with Chro and Mgtor as part of a macromolecular complex forming the spindle matrix. Chro colocalizes with Skeletor (Skel) on the chromosomes at interphase and on spindle during metaphase.

It is found in the cytoplasm. Its subcellular location is the cytoskeleton. It localises to the spindle. The protein resides in the nucleus. The protein localises to the nucleolus. It is found in the chromosome. Its function is as follows. Provides structural support to stabilize and organize the microtubule spindle during mitosis (within embryonic somatic cells) and meiosis (within spermatocytes). The role in mitosis regulation depends on the Ran pathway. The chain is Protein Skeletor, isoforms D/E from Drosophila melanogaster (Fruit fly).